Consider the following 151-residue polypeptide: Viral interleukin-17 (151 aa).

The N-terminal stretch at 1 to 22 is a signal peptide; sequence MTFRKTSLVLLLLLSIDCIVKS. N-linked (GlcNAc...) asparagine; by host glycans are attached at residues N36, N53, and N64. Intrachain disulfides connect C90–C140 and C95–C142.

This sequence belongs to the IL-17 family.

The protein resides in the secreted. The polypeptide is Viral interleukin-17 (13) (Saimiri sciureus (Common squirrel monkey)).